Consider the following 287-residue polypeptide: 4-diphosphocytidyl-2-C-methyl-D-erythritol kinase (287 aa).

The active site involves lysine 10. Residue 92 to 102 (PLAAGLAGGSA) coordinates ATP. Aspartate 134 is an active-site residue.

Belongs to the GHMP kinase family. IspE subfamily.

It carries out the reaction 4-CDP-2-C-methyl-D-erythritol + ATP = 4-CDP-2-C-methyl-D-erythritol 2-phosphate + ADP + H(+). It functions in the pathway isoprenoid biosynthesis; isopentenyl diphosphate biosynthesis via DXP pathway; isopentenyl diphosphate from 1-deoxy-D-xylulose 5-phosphate: step 3/6. In terms of biological role, catalyzes the phosphorylation of the position 2 hydroxy group of 4-diphosphocytidyl-2C-methyl-D-erythritol. The polypeptide is 4-diphosphocytidyl-2-C-methyl-D-erythritol kinase (Caldanaerobacter subterraneus subsp. tengcongensis (strain DSM 15242 / JCM 11007 / NBRC 100824 / MB4) (Thermoanaerobacter tengcongensis)).